The primary structure comprises 445 residues: Tubulin beta-4B chain (445 aa).

An MREI motif motif is present at residues 1-4; it reads MREI. Residue glutamine 11 participates in GTP binding. Threonine 55 is modified (phosphothreonine). An N6-acetyllysine modification is found at lysine 58. Positions 69, 138, 142, 143, and 144 each coordinate GTP. Glutamate 69 contributes to the Mg(2+) binding site. Serine 172 carries the phosphoserine; by CDK1 modification. The GTP site is built by asparagine 204 and asparagine 226. The disordered stretch occupies residues 426–445; it reads QDATAEEEGEFEEEAEEEVA. Acidic residues predominate over residues 429–445; it reads TAEEEGEFEEEAEEEVA. Position 438 is a 5-glutamyl polyglutamate (glutamate 438).

This sequence belongs to the tubulin family. Dimer of alpha and beta chains. A typical microtubule is a hollow water-filled tube with an outer diameter of 25 nm and an inner diameter of 15 nM. Alpha-beta heterodimers associate head-to-tail to form protofilaments running lengthwise along the microtubule wall with the beta-tubulin subunit facing the microtubule plus end conferring a structural polarity. Microtubules usually have 13 protofilaments but different protofilament numbers can be found in some organisms and specialized cells. Component of sperm flagellar doublet microtubules. Mg(2+) serves as cofactor. Some glutamate residues at the C-terminus are polyglycylated, resulting in polyglycine chains on the gamma-carboxyl group. Glycylation is mainly limited to tubulin incorporated into axonemes (cilia and flagella) whereas glutamylation is prevalent in neuronal cells, centrioles, axonemes, and the mitotic spindle. Both modifications can coexist on the same protein on adjacent residues, and lowering polyglycylation levels increases polyglutamylation, and reciprocally. Cilia and flagella glycylation is required for their stability and maintenance. Flagella glycylation controls sperm motility. Post-translationally, some glutamate residues at the C-terminus are polyglutamylated, resulting in polyglutamate chains on the gamma-carboxyl group. Polyglutamylation plays a key role in microtubule severing by spastin (SPAST). SPAST preferentially recognizes and acts on microtubules decorated with short polyglutamate tails: severing activity by SPAST increases as the number of glutamates per tubulin rises from one to eight, but decreases beyond this glutamylation threshold. Glutamylation is also involved in cilia motility. In terms of processing, phosphorylated on Ser-172 by CDK1 during the cell cycle, from metaphase to telophase, but not in interphase. This phosphorylation inhibits tubulin incorporation into microtubules.

It localises to the cytoplasm. The protein localises to the cytoskeleton. It is found in the flagellum axoneme. Its function is as follows. Tubulin is the major constituent of microtubules, a cylinder consisting of laterally associated linear protofilaments composed of alpha- and beta-tubulin heterodimers. Microtubules grow by the addition of GTP-tubulin dimers to the microtubule end, where a stabilizing cap forms. Below the cap, tubulin dimers are in GDP-bound state, owing to GTPase activity of alpha-tubulin. The sequence is that of Tubulin beta-4B chain (TUBB4B) from Bos taurus (Bovine).